The chain runs to 79 residues: Large ribosomal subunit protein uL24 (79 aa).

Belongs to the universal ribosomal protein uL24 family. As to quaternary structure, part of the 50S ribosomal subunit.

Functionally, one of two assembly initiator proteins, it binds directly to the 5'-end of the 23S rRNA, where it nucleates assembly of the 50S subunit. In terms of biological role, one of the proteins that surrounds the polypeptide exit tunnel on the outside of the subunit. In Lactobacillus johnsonii (strain CNCM I-12250 / La1 / NCC 533), this protein is Large ribosomal subunit protein uL24.